The primary structure comprises 289 residues: GTPase Era (289 aa).

An Era-type G domain is found at 2 to 167 (KSGFISLIGR…LDEIYKYLPE (166 aa)). Residues 10–17 (GRTNAGKS) form a G1 region. 10–17 (GRTNAGKS) serves as a coordination point for GTP. The tract at residues 36 to 40 (NATRR) is G2. The tract at residues 57–60 (DTPG) is G3. Residues 57-61 (DTPGL) and 116-119 (TKID) contribute to the GTP site. Positions 116-119 (TKID) are G4. Positions 146-148 (LSV) are G5. A KH type-2 domain is found at 198-274 (VSDEVPYSTD…FLKINVKIDK (77 aa)).

This sequence belongs to the TRAFAC class TrmE-Era-EngA-EngB-Septin-like GTPase superfamily. Era GTPase family. As to quaternary structure, monomer.

The protein resides in the cytoplasm. The protein localises to the cell inner membrane. Its function is as follows. An essential GTPase that binds both GDP and GTP, with rapid nucleotide exchange. Plays a role in 16S rRNA processing and 30S ribosomal subunit biogenesis and possibly also in cell cycle regulation and energy metabolism. In Campylobacter fetus subsp. fetus (strain 82-40), this protein is GTPase Era.